The following is an 81-amino-acid chain: Cell division protein ZapB (81 aa).

Residues 5 to 81 (LEVFEKLESK…QALLGRMEEV (77 aa)) adopt a coiled-coil conformation. A disordered region spans residues 43-64 (VQSAQHGREELERENSQLKEQQ). Basic and acidic residues predominate over residues 48-59 (HGREELERENSQ).

This sequence belongs to the ZapB family. In terms of assembly, homodimer. The ends of the coiled-coil dimer bind to each other, forming polymers. Interacts with FtsZ.

It localises to the cytoplasm. Functionally, non-essential, abundant cell division factor that is required for proper Z-ring formation. It is recruited early to the divisome by direct interaction with FtsZ, stimulating Z-ring assembly and thereby promoting cell division earlier in the cell cycle. Its recruitment to the Z-ring requires functional FtsA or ZipA. This Klebsiella pneumoniae subsp. pneumoniae (strain ATCC 700721 / MGH 78578) protein is Cell division protein ZapB.